The following is a 127-amino-acid chain: Cliotide T3 (127 aa).

The first 24 residues, 1 to 24 (MAYVRLTSLAVLFFLAASVMKTEG), serve as a signal peptide directing secretion. The segment at residues 25–53 (GLPTCGETCTLGTCYVPDCSCSWPICMKN) is a cross-link (cyclopeptide (Gly-Asn)). Cystine bridges form between Cys-29-Cys-43, Cys-33-Cys-45, and Cys-38-Cys-50. The propeptide at 54–127 (HIIAANAKTV…DLKMPLESTN (74 aa)) is removed in mature form.

Post-translationally, contains 3 disulfide bonds. In terms of processing, this is a cyclic peptide. As to expression, expressed in flower, stem, shoot, leaf and seed but not in root, pod and nodule (at protein level).

In terms of biological role, probably participates in a plant defense mechanism. Not active against Gram-negative bacteria E.coli ATCC 700926, K.pneumoniae ATTC 13883 and P.aeruginosa ATCC 39018 at concentration up to 100 uM. Has cytotoxic and hemolytic activity. This chain is Cliotide T3, found in Clitoria ternatea (Butterfly pea).